The chain runs to 91 residues: Small ribosomal subunit protein bS20 (91 aa).

This sequence belongs to the bacterial ribosomal protein bS20 family.

Its function is as follows. Binds directly to 16S ribosomal RNA. This is Small ribosomal subunit protein bS20 from Wolinella succinogenes (strain ATCC 29543 / DSM 1740 / CCUG 13145 / JCM 31913 / LMG 7466 / NCTC 11488 / FDC 602W) (Vibrio succinogenes).